We begin with the raw amino-acid sequence, 135 residues long: Photosystem II extrinsic protein U (135 aa).

The N-terminal stretch at 1-29 (MKRLLSWLTGALVMASLMAGLVMPSSVYA) is a signal peptide.

This sequence belongs to the PsbU family. PSII is composed of 1 copy each of membrane proteins PsbA, PsbB, PsbC, PsbD, PsbE, PsbF, PsbH, PsbI, PsbJ, PsbK, PsbL, PsbM, PsbT, PsbX, PsbY, PsbZ, Psb30/Ycf12, peripheral proteins PsbO, CyanoQ (PsbQ), PsbU, PsbV and a large number of cofactors. It forms dimeric complexes.

It is found in the cellular thylakoid membrane. Its function is as follows. One of the extrinsic, lumenal subunits of photosystem II (PSII). PSII is a light-driven water plastoquinone oxidoreductase, using light energy to abstract electrons from H(2)O, generating a proton gradient subsequently used for ATP formation. The extrinsic proteins stabilize the structure of photosystem II oxygen-evolving complex (OEC), the ion environment of oxygen evolution and protect the OEC against heat-induced inactivation. The protein is Photosystem II extrinsic protein U of Synechococcus sp. (strain CC9605).